The chain runs to 38 residues: Toxin Bcg III 31.16 (38 aa).

Intrachain disulfides connect Cys-4–Cys-37, Cys-6–Cys-30, and Cys-20–Cys-38.

Belongs to the sea anemone type 3 (BDS) potassium channel toxin family.

The protein localises to the secreted. The protein resides in the nematocyst. In terms of biological role, possible modulator of crustacean voltage-gated sodium channels (Nav). The sequence is that of Toxin Bcg III 31.16 from Bunodosoma cangicum (Sea anemone).